Reading from the N-terminus, the 234-residue chain is uncharacterized protein (234 aa).

This is an uncharacterized protein from Methanocaldococcus jannaschii (strain ATCC 43067 / DSM 2661 / JAL-1 / JCM 10045 / NBRC 100440) (Methanococcus jannaschii).